A 173-amino-acid polypeptide reads, in one-letter code: Ribosome maturation factor RimM (173 aa).

In terms of domain architecture, PRC barrel spans 92 to 165; sequence EGEFYHADLI…RVVIEMPGEI (74 aa).

The protein belongs to the RimM family. As to quaternary structure, binds ribosomal protein uS19.

It localises to the cytoplasm. Functionally, an accessory protein needed during the final step in the assembly of 30S ribosomal subunit, possibly for assembly of the head region. Essential for efficient processing of 16S rRNA. May be needed both before and after RbfA during the maturation of 16S rRNA. It has affinity for free ribosomal 30S subunits but not for 70S ribosomes. In Nitrobacter hamburgensis (strain DSM 10229 / NCIMB 13809 / X14), this protein is Ribosome maturation factor RimM.